The following is a 366-amino-acid chain: NADH-quinone oxidoreductase subunit D (366 aa).

Belongs to the complex I 49 kDa subunit family. NDH-1 is composed of 14 different subunits. Subunits NuoB, C, D, E, F, and G constitute the peripheral sector of the complex.

The protein localises to the cell membrane. It carries out the reaction a quinone + NADH + 5 H(+)(in) = a quinol + NAD(+) + 4 H(+)(out). In terms of biological role, NDH-1 shuttles electrons from NADH, via FMN and iron-sulfur (Fe-S) centers, to quinones in the respiratory chain. The immediate electron acceptor for the enzyme in this species is believed to be a menaquinone. Couples the redox reaction to proton translocation (for every two electrons transferred, four hydrogen ions are translocated across the cytoplasmic membrane), and thus conserves the redox energy in a proton gradient. This is NADH-quinone oxidoreductase subunit D from Bacillus cytotoxicus (strain DSM 22905 / CIP 110041 / 391-98 / NVH 391-98).